The following is a 309-amino-acid chain: GTP cyclohydrolase FolE2 (309 aa).

The protein belongs to the GTP cyclohydrolase IV family.

It catalyses the reaction GTP + H2O = 7,8-dihydroneopterin 3'-triphosphate + formate + H(+). It functions in the pathway cofactor biosynthesis; 7,8-dihydroneopterin triphosphate biosynthesis; 7,8-dihydroneopterin triphosphate from GTP: step 1/1. In terms of biological role, converts GTP to 7,8-dihydroneopterin triphosphate. This chain is GTP cyclohydrolase FolE2, found in Serratia proteamaculans (strain 568).